Consider the following 281-residue polypeptide: Release factor glutamine methyltransferase (281 aa).

S-adenosyl-L-methionine is bound by residues Glu-142 and Asn-184. 184–187 (NPPY) lines the substrate pocket. Residues 261–281 (AADHPDLNNRPRFATARKALP) are disordered.

It belongs to the protein N5-glutamine methyltransferase family. PrmC subfamily.

It catalyses the reaction L-glutaminyl-[peptide chain release factor] + S-adenosyl-L-methionine = N(5)-methyl-L-glutaminyl-[peptide chain release factor] + S-adenosyl-L-homocysteine + H(+). In terms of biological role, methylates the class 1 translation termination release factors RF1/PrfA and RF2/PrfB on the glutamine residue of the universally conserved GGQ motif. This Streptomyces coelicolor (strain ATCC BAA-471 / A3(2) / M145) protein is Release factor glutamine methyltransferase.